Consider the following 2333-residue polypeptide: Genome polyprotein (2333 aa).

Residues 1–201 (MNTTDCFIAL…WKTKVQQKLK (201 aa)) enclose the Peptidase C28 domain. The Cytoplasmic segment spans residues 1–1481 (MNTTDCFIAL…SFVKRAFKRL (1481 aa)). Active-site for leader protease activity residues include C51, H148, and D163. 2 disordered regions span residues 197–218 (QQKL…QSGN) and 238–265 (QLGD…NTQN). G202 carries N-myristoyl glycine; by host lipidation. Composition is skewed to polar residues over residues 204-218 (GQSS…QSGN) and 238-251 (QLGD…SNEG). Residues 252 to 265 (STDTTSTHTTNTQN) are compositionally biased toward low complexity. Positions 789–797 (ALLRAATYY) are antigenic epitope. The Cell attachment site motif lies at 869-871 (RGD). In terms of domain architecture, SF3 helicase spans 1190 to 1354 (NVHIANLCKV…DGYKINNKLD (165 aa)). 1218–1225 (GKSGQGKS) provides a ligand contact to ATP. Residues 1482–1502 (KENFEIVALCLTLLANIVIMI) lie within the membrane without spanning it. The Cytoplasmic portion of the chain corresponds to 1503 to 2333 (RETRKRQKMV…RWVNAVCGDA (831 aa)). 2 stretches are compositionally biased toward basic and acidic residues: residues 1530 to 1539 (KTLDEAEKNP) and 1550 to 1564 (FRER…RNDE). A disordered region spans residues 1530 to 1585 (KTLDEAEKNPLETSGASTVGFRERPLPGQKARNDENSEPAQPAEEQPQAEGPYAGP). Residues 1567–1579 (EPAQPAEEQPQAE) show a composition bias toward low complexity. O-(5'-phospho-RNA)-tyrosine is present on residues Y1582, Y1605, and Y1629. The Peptidase C3 domain maps to 1653 to 1849 (APPTDLQKLV…YCSCVSRSML (197 aa)). H1696 acts as the For protease 3C activity; Proton donor/acceptor in catalysis. Active-site for protease 3C activity residues include D1734 and C1813. Positions 1879–1887 (MRKTKLAPT) match the Nuclear localization signal motif. Positions 2097–2215 (RNVWDVDYSA…ASDYDLDFEA (119 aa)) constitute a RdRp catalytic domain. The active-site For RdRp activity is the D2201.

It belongs to the picornaviruses polyprotein family. As to quaternary structure, interacts with host ISG15. In terms of assembly, interacts (via R-G-D motif) with host ITGAV/ITGB6. Interacts with host MAVS; this interaction inhibits binding of host TRAF3 to MAVS, thereby suppressing interferon-mediated responses. Forms homooligomers. As to quaternary structure, homohexamer. Interacts with host VIM. Interacts with host BECN1. In terms of assembly, interacts with host DCTN3. Interacts with RNA-dependent RNA polymerase; this interaction allows 3B-1 to binds 2 polymerases and act as a primer. It also allows the recruitment of the RNA-dependent RNA polymerase to host membranes. As to quaternary structure, interacts with RNA-dependent RNA polymerase; this interaction allows 3B-2 to act as a primer. In terms of assembly, interacts with RNA-dependent RNA polymerase; this interaction allows 3B-3 to act as a primer. Interacts with 3B-1; this interaction allows 3B-1 to binds 2 polymerases and act as a primer. It also allows the recruitment of the RNA-dependent RNA polymerase to host membranes. Interacts with 3B-2; this interaction allows 3B-2 to act as a primer. Interacts with 3B-3; this interaction allows 3B-3 to act as a primer. Removes six residues from its own C-terminus, generating sLb(pro). Post-translationally, specific enzymatic cleavages in vivo by the viral proteases yield a variety of precursors and mature proteins. The polyprotein seems to be cotranslationally cleaved at the 2A/2B junction by a ribosomal skip from one codon to the next without formation of a peptide bond. This process would release the L-P1-2A peptide from the translational complex. In terms of processing, during virion maturation, immature virions are rendered infectious following cleavage of VP0 into VP4 and VP2. This maturation seems to be an autocatalytic event triggered by the presence of RNA in the capsid and is followed by a conformational change of the particle. Myristoylation is required during RNA encapsidation and formation of the mature virus particle. Post-translationally, uridylylated by the polymerase and covalently linked to the 5'-end of genomic RNA. These uridylylated forms act as a nucleotide-peptide primer for the polymerase.

It is found in the host nucleus. Its subcellular location is the host cytoplasm. The protein localises to the virion. It localises to the host endoplasmic reticulum membrane. The protein resides in the host cytoplasmic vesicle membrane. It carries out the reaction Autocatalytically cleaves itself from the polyprotein of the foot-and-mouth disease virus by hydrolysis of a Lys-|-Gly bond, but then cleaves host cell initiation factor eIF-4G at bonds -Gly-|-Arg- and -Lys-|-Arg-.. It catalyses the reaction a ribonucleoside 5'-triphosphate + H2O = a ribonucleoside 5'-diphosphate + phosphate + H(+). The catalysed reaction is RNA(n) + a ribonucleoside 5'-triphosphate = RNA(n+1) + diphosphate. The enzyme catalyses Selective cleavage of Gln-|-Gly bond in the poliovirus polyprotein. In other picornavirus reactions Glu may be substituted for Gln, and Ser or Thr for Gly.. Functionally, autocatalytically cleaves itself from the polyprotein at the L/VP0 junction. Also cleaves the host translation initiation factors EIF4G1 and EIF4G3, in order to shut off the capped cellular mRNA transcription. Plays a role in counteracting host innate antiviral response using diverse mechanisms. Possesses a deubiquitinase activity acting on both 'Lys-48' and 'Lys-63'-linked polyubiquitin chains. In turn, inhibits the ubiquitination and subsequent activation of key signaling molecules of type I IFN response such as host RIGI, TBK1, TRAF3 and TRAF6. Inhibits host NF-kappa-B activity by inducing a decrease in RELA mRNA levels. Cleaves a peptide bond in the C-terminus of host ISG15, resulting in the damaging of this modifier that can no longer be attached to target proteins. Also cleaves host G3BP1 and G3BP2 in order to inhibit cytoplasmic stress granules assembly. In terms of biological role, lies on the inner surface of the capsid shell. After binding to the host receptor, the capsid undergoes conformational changes. Capsid protein VP4 is released, capsid protein VP1 N-terminus is externalized, and together, they shape a pore in the host membrane through which the viral genome is translocated into the host cell cytoplasm. After genome has been released, the channel shrinks. Forms an icosahedral capsid of pseudo T=3 symmetry with capsid proteins VP1 and VP3. The capsid is composed of 60 copies of each capsid protein organized in the form of twelve pentamers and encloses the viral positive strand RNA genome. Upon acidifcation in the endosome, dissociates into pentamers. Its function is as follows. Forms an icosahedral capsid of pseudo T=3 symmetry with capsid proteins VP0 and VP3. The capsid is composed of 60 copies of each capsid protein organized in the form of twelve pentamers and encloses the viral positive strand RNA genome. Upon acidifcation in the endosome, dissociates into pentamers. Functionally, forms an icosahedral capsid of pseudo T=3 symmetry with capsid proteins VP2 and VP3. The capsid is composed of 60 copies of each capsid protein organized in the form of twelve pentamers and encloses the viral positive strand RNA genome. Mediates cell entry by attachment to an integrin receptor, usually host ITGAV/ITGB6. In addition, targets host MAVS to suppress type I IFN pathway. Upon acidifcation in the endosome, dissociates into pentamers. In terms of biological role, mediates self-processing of the polyprotein by a translational effect termed 'ribosome skipping'. Mechanistically, 2A-mediated cleavage occurs between the C-terminal glycine and the proline of the downstream protein 2B. In the case of foot-and-mouth disease virus, the 2A oligopeptide is post-translationally 'trimmed' from the C-terminus of the upstream protein 1D by 3C proteinase. Plays an essential role in the virus replication cycle by acting as a viroporin. Creates a pore in the host endoplasmic reticulum and as a consequence releases Ca2+ in the cytoplasm of infected cell. In turn, high levels of cytoplasmic calcium may trigger membrane trafficking and transport of viral ER-associated proteins to viroplasms, sites of viral genome replication. Its function is as follows. Associates with and induces structural rearrangements of intracellular membranes. Triggers host autophagy by interacting with host BECN1 and thereby promotes viral replication. Participates in viral replication and interacts with host DHX9. Displays RNA-binding, nucleotide binding and NTPase activities. May play a role in virion morphogenesis and viral RNA encapsidation by interacting with the capsid protein VP3. Functionally, plays important roles in virus replication, virulence and host range. Cooperates with host DDX56 to inhibit IRF3 nuclear translocation and subsequent type I interferon production. In terms of biological role, covalently linked to the 5'-end of both the positive-strand and negative-strand genomic RNAs. Acts as a genome-linked replication primer. Cysteine protease that generates mature viral proteins from the precursor polyprotein. In addition to its proteolytic activity, binds to viral RNA and thus influences viral genome replication. RNA and substrate bind cooperatively to the protease. Its function is as follows. RNA-directed RNA polymerase 3D-POL replicates genomic and antigenomic RNA by recognizing replications specific signals. Covalently attaches UMP to a tyrosine of VPg, which is used to prime RNA synthesis. The positive stranded RNA genome is first replicated at virus induced membranous vesicles, creating a dsRNA genomic replication form. This dsRNA is then used as template to synthesize positive stranded RNA genomes. ss(+)RNA genomes are either translated, replicated or encapsidated. The protein is Genome polyprotein of Bos taurus (Bovine).